Reading from the N-terminus, the 353-residue chain is Probable dual-specificity RNA methyltransferase RlmN (353 aa).

Glu104 acts as the Proton acceptor in catalysis. Positions 112–341 (DGGRKTICIS…ILNRRSPGKD (230 aa)) constitute a Radical SAM core domain. A disulfide bridge links Cys119 with Cys346. Positions 126, 130, and 133 each coordinate [4Fe-4S] cluster. Residues 173–174 (GE), Ser205, 228–230 (SLN), and Asn304 each bind S-adenosyl-L-methionine. The S-methylcysteine intermediate role is filled by Cys346.

This sequence belongs to the radical SAM superfamily. RlmN family. Requires [4Fe-4S] cluster as cofactor.

The protein localises to the cytoplasm. The catalysed reaction is adenosine(2503) in 23S rRNA + 2 reduced [2Fe-2S]-[ferredoxin] + 2 S-adenosyl-L-methionine = 2-methyladenosine(2503) in 23S rRNA + 5'-deoxyadenosine + L-methionine + 2 oxidized [2Fe-2S]-[ferredoxin] + S-adenosyl-L-homocysteine. It carries out the reaction adenosine(37) in tRNA + 2 reduced [2Fe-2S]-[ferredoxin] + 2 S-adenosyl-L-methionine = 2-methyladenosine(37) in tRNA + 5'-deoxyadenosine + L-methionine + 2 oxidized [2Fe-2S]-[ferredoxin] + S-adenosyl-L-homocysteine. Its function is as follows. Specifically methylates position 2 of adenine 2503 in 23S rRNA and position 2 of adenine 37 in tRNAs. The polypeptide is Probable dual-specificity RNA methyltransferase RlmN (Leptospira interrogans serogroup Icterohaemorrhagiae serovar Lai (strain 56601)).